An 84-amino-acid chain; its full sequence is Three-finger toxin 3FTx-1 (84 aa).

A signal peptide spans 1-21 (MKTLLLTLVVVTIVCLDLGNS). Cystine bridges form between Cys24–Cys41, Cys34–Cys59, Cys63–Cys71, and Cys72–Cys77. The N-linked (GlcNAc...) asparagine glycan is linked to Asn78.

The protein belongs to the three-finger toxin family. Short-chain subfamily. As to expression, expressed by the venom gland.

The protein resides in the secreted. In Micrurus corallinus (Brazilian coral snake), this protein is Three-finger toxin 3FTx-1.